The following is a 278-amino-acid chain: Putative phosphoenolpyruvate synthase regulatory protein (278 aa).

ADP is bound at residue 157–164; the sequence is GVSRSGKT.

This sequence belongs to the pyruvate, phosphate/water dikinase regulatory protein family. PSRP subfamily.

The enzyme catalyses [pyruvate, water dikinase] + ADP = [pyruvate, water dikinase]-phosphate + AMP + H(+). The catalysed reaction is [pyruvate, water dikinase]-phosphate + phosphate + H(+) = [pyruvate, water dikinase] + diphosphate. In terms of biological role, bifunctional serine/threonine kinase and phosphorylase involved in the regulation of the phosphoenolpyruvate synthase (PEPS) by catalyzing its phosphorylation/dephosphorylation. The sequence is that of Putative phosphoenolpyruvate synthase regulatory protein from Vibrio parahaemolyticus serotype O3:K6 (strain RIMD 2210633).